The sequence spans 194 residues: Peptidyl-tRNA hydrolase (194 aa).

TRNA is bound at residue Y17. H22 (proton acceptor) is an active-site residue. The tRNA site is built by F68, N70, and N116.

This sequence belongs to the PTH family. As to quaternary structure, monomer.

The protein resides in the cytoplasm. It carries out the reaction an N-acyl-L-alpha-aminoacyl-tRNA + H2O = an N-acyl-L-amino acid + a tRNA + H(+). Its function is as follows. Hydrolyzes ribosome-free peptidyl-tRNAs (with 1 or more amino acids incorporated), which drop off the ribosome during protein synthesis, or as a result of ribosome stalling. Functionally, catalyzes the release of premature peptidyl moieties from peptidyl-tRNA molecules trapped in stalled 50S ribosomal subunits, and thus maintains levels of free tRNAs and 50S ribosomes. The chain is Peptidyl-tRNA hydrolase from Actinobacillus pleuropneumoniae serotype 7 (strain AP76).